Consider the following 281-residue polypeptide: LIM domain-containing protein G (281 aa).

LIM zinc-binding domains are found at residues leucine 40 to asparagine 101, aspartate 141 to valine 205, and asparagine 206 to proline 262.

The sequence is that of LIM domain-containing protein G (limG) from Dictyostelium discoideum (Social amoeba).